Reading from the N-terminus, the 322-residue chain is Methionyl-tRNA formyltransferase (322 aa).

112 to 115 (SLLP) lines the (6S)-5,6,7,8-tetrahydrofolate pocket.

Belongs to the Fmt family.

It carries out the reaction L-methionyl-tRNA(fMet) + (6R)-10-formyltetrahydrofolate = N-formyl-L-methionyl-tRNA(fMet) + (6S)-5,6,7,8-tetrahydrofolate + H(+). Its function is as follows. Attaches a formyl group to the free amino group of methionyl-tRNA(fMet). The formyl group appears to play a dual role in the initiator identity of N-formylmethionyl-tRNA by promoting its recognition by IF2 and preventing the misappropriation of this tRNA by the elongation apparatus. In Synechococcus sp. (strain JA-3-3Ab) (Cyanobacteria bacterium Yellowstone A-Prime), this protein is Methionyl-tRNA formyltransferase.